The chain runs to 356 residues: Carbohydrate sulfotransferase 10 (356 aa).

Over 1–6 (MHHQWL) the chain is Cytoplasmic. A helical; Signal-anchor for type II membrane protein transmembrane segment spans residues 7-27 (LLAACFWVIFMFMVASKFITL). Over 28–356 (TFKDPDGYSA…GYQKPDFLLN (329 aa)) the chain is Lumenal. Residue N99 is glycosylated (N-linked (GlcNAc...) asparagine). Residues 127 to 133 (PKVGNTQ) and 189 to 197 (RDPFERLIS) each bind 3'-phosphoadenylyl sulfate. N-linked (GlcNAc...) asparagine glycans are attached at residues N228 and N316.

Belongs to the sulfotransferase 2 family. In myogenic progenitors, it is ubiquitously expressed.

The protein resides in the golgi apparatus membrane. It carries out the reaction 3-O-{beta-D-GlcA-(1-&gt;[3)-alpha-D-Xyl-(1-&gt;3)-beta-D-GlcA-(1-&gt;](n)-4)-beta-D-Xyl-(1-&gt;4)-Rib-ol-P-Rib-ol-P-3-beta-D-GalNAc-(1-&gt;3)-beta-D-GlcNAc-(1-&gt;4)-O-6-P-alpha-D-Man}-L-Thr-[protein] + 3'-phosphoadenylyl sulfate = 3-O-{O-3-S-beta-D-GlcA-(1-&gt;[3)-alpha-D-Xyl-(1-&gt;3)-beta-D-GlcA-(1-&gt;](n)-4)-beta-D-Xyl-(1-&gt;4)-Rib-ol-P-Rib-ol-P-3-beta-D-GalNAc-(1-&gt;3)-beta-D-GlcNAc-(1-&gt;4)-O-6-P-alpha-D-Man}-L-Thr-[protein] + adenosine 3',5'-bisphosphate + H(+). The enzyme catalyses 17beta-estradiol 3-O-(beta-D-glucuronate) + 3'-phosphoadenylyl sulfate = 17beta-estradiol 3-O-(3-sulfo-beta-D-glucuronate) + adenosine 3',5'-bisphosphate + H(+). The catalysed reaction is 17beta-estradiol 3-O-(beta-D-glucuronate) 17-sulfate + 3'-phosphoadenylyl sulfate = 17beta-estradiol 3-O-(3-sulfo-beta-D-glucuronate) 17-sulfate + adenosine 3',5'-bisphosphate + H(+). It catalyses the reaction 17beta-estradiol 17-O-(beta-D-glucuronate) + 3'-phosphoadenylyl sulfate = 17beta-estradiol 17-O-(3-sulfo-beta-D-glucuronate) + adenosine 3',5'-bisphosphate + H(+). It carries out the reaction 16alpha,17beta-estriol 3-O-(beta-D-glucuronate) + 3'-phosphoadenylyl sulfate = 16alpha,17beta-estriol 3-O-(3-sulfo-beta-D-glucuronate) + adenosine 3',5'-bisphosphate + H(+). The enzyme catalyses 16alpha,17beta-estriol 16-O-(beta-D-glucuronate) + 3'-phosphoadenylyl sulfate = 16alpha,17beta-estriol 16-O-(3-sulfo-beta-D-glucuronate) + adenosine 3',5'-bisphosphate + H(+). The catalysed reaction is 16alpha,17beta-estriol 17-O-(beta-D-glucuronate) + 3'-phosphoadenylyl sulfate = 16alpha,17beta-estriol 17-O-(3-sulfo-beta-D-glucuronate) + adenosine 3',5'-bisphosphate + H(+). It catalyses the reaction estrone 3-O-(beta-D-glucuronate) + 3'-phosphoadenylyl sulfate = estrone 3-O-(3-sulfo-beta-D-glucuronate) + adenosine 3',5'-bisphosphate + H(+). It carries out the reaction 3alpha,20alpha-dihydroxy-5beta-pregnane 3-O-(beta-D-glucuronate) + 3'-phosphoadenylyl sulfate = 3alpha,20alpha-dihydroxy-5beta-pregnane 3-O-(3-sulfo-beta-D-glucuronate) + adenosine 3',5'-bisphosphate + H(+). The enzyme catalyses testosterone 17-O-(beta-D-glucuronate) + 3'-phosphoadenylyl sulfate = testosterone 17-O-(3-sulfo-beta-D-glucuronate) + adenosine 3',5'-bisphosphate + H(+). The catalysed reaction is 3beta-androst-5-en-17-one 3-O-(beta-D-glucuronate) + 3'-phosphoadenylyl sulfate = 3beta-androst-5-en-17-one 3-O-(3-sulfo-beta-D-glucuronate) + adenosine 3',5'-bisphosphate + H(+). It catalyses the reaction 3alpha,17alpha-dihydroxy-5beta-androstane-11-one-17beta-carboxylate 3-O-(beta-D-glucuronate) + 3'-phosphoadenylyl sulfate = 3alpha,17alpha-dihydroxy-5beta-androstane-11-one-17beta-carboxylate 3-O-(3-sulfo-beta-D-glucuronate) + adenosine 3',5'-bisphosphate + H(+). It carries out the reaction 3alpha-hydroxyetiocholan-17-one 3-O-(beta-D-glucuronate) + 3'-phosphoadenylyl sulfate = 3alpha-hydroxyetiocholan-17-one 3-O-(3-sulfo-beta-D-glucuronate) + adenosine 3',5'-bisphosphate + H(+). Its pathway is steroid metabolism. The protein operates within protein modification; carbohydrate sulfation. Catalyzes the transfer of sulfate from 3'-phosphoadenylyl sulfate (PAPS) to position 3 of terminal glucuronic acid of both protein- and lipid-linked oligosaccharides. Participates in biosynthesis of HNK-1 carbohydrate structure 3-O-sulfo-beta-D-GlcA-(1-&gt;3)-beta-D-Gal-(1-&gt;4)-D-GlcNAc-R, a sulfated glucuronyl-lactosaminyl residue carried by many neural recognition molecules, which is involved in cell interactions during ontogenetic development and in synaptic plasticity in the adult. May be indirectly involved in synapse plasticity of the hippocampus, via its role in HNK-1 biosynthesis. Sulfates terminal glucuronyl residue of the laminin globular (LG)-domain binding epitope on DAG1/alpha-dystroglycan and prevents further polymerization by LARGE1 glycosyltransferase. Likely defines the chain length of LG epitope, conferring binding specificity to extracellular matrix components. Plays a role in down-regulating the steroid hormones. Sulfates glucuronidated estrogens and androgens with an impact in hormone cycle and fertility. Has a preference for glucuronyl moiety at the 3-hydroxyl group of a sterol ring rather than the 17-hydroxyl group, showing high catalytic efficiency for 17beta-estradiol 3-O-(beta-D-glucuronate) and dehydroepiandrosterone 3-O-(beta-D-glucuronate) hormones. The chain is Carbohydrate sulfotransferase 10 (Chst10) from Rattus norvegicus (Rat).